We begin with the raw amino-acid sequence, 4421 residues long: Replicase polyprotein 1a (4421 aa).

Residues 54–174 form the CoV Nsp1 globular domain; sequence YDNHVKIDCR…HKWFQFCRLY (121 aa). The region spanning 192–222 is the BetaCoV Nsp1 C-terminal domain; sequence FSVEAAYAEVHAEPKGKYSQKAYALLRQYRG. The CoV Nsp2 N-terminal domain maps to 226-488; that stretch reads VLFVDQYGCD…LITHALYLDY (263 aa). Residues Cys-365, Cys-370, Cys-386, and Cys-389 each contribute to the Zn(2+) site. Residues 365-389 form a C4 region; it reads CFNDNCDFYGWVSGNMMDGFSCPLC. Residues 493–681 enclose the CoV Nsp2 middle domain; that stretch reads CGNLEQNHIL…VNKFYTFFKL (189 aa). The CoV Nsp2 C-terminal domain maps to 697 to 809; sequence LKTINGLVCI…LDHAWRFPCA (113 aa). Residues 811–923 enclose the Ubiquitin-like 1 domain; that stretch reads RKVNFNEKPV…MYCTFAIEDV (113 aa). Repeat copies occupy residues 945-954, 955-964, 965-974, 975-984, 985-994, 995-1004, 1005-1014, 1015-1024, and 1025-1034. The segment at 945–1034 is 9 X 10 AA tandem repeat of N-[DN]-D-E-D-V-V-T-G-D; that stretch reads NDDEDVVTGD…NNDEDVVTGD (90 aa). A disordered region spans residues 947 to 1042; sequence DEDVVTGDND…GDNNDEESVT (96 aa). A Peptidase C16 1 domain is found at 1073 to 1323; sequence VFNDVYNDAL…VCFVKGDIIN (251 aa). Residue Cys-1111 is the For PL1-PRO activity of the active site. 4 residues coordinate Zn(2+): Cys-1188, Cys-1191, Cys-1214, and Cys-1216. The segment at 1188–1216 adopts a C4-type 1 zinc-finger fold; sequence CLKCGFSFDLNGLDAVFFYGDIVSHVCKC. Active-site for PL1-PRO activity residues include His-1262 and Asp-1273. A Macro domain is found at 1301–1472; it reads ELAQLYGLCI…IIQKCQITSV (172 aa). One can recognise a DPUP domain in the interval 1528–1599; the sequence is NDVRDYLLSK…TVNQVCVLLA (72 aa). Residues 1599–1654 enclose the Ubiquitin-like 2 domain; sequence AKKIDVLLTVDGVNFKSISLTVGEVFGKILGNVFCDGIDVTKLKCSDFYADKILYQ. In terms of domain architecture, Peptidase C16 2 spans 1668–1928; the sequence is SSFGFDQQQL…MVAYNPDLSQ (261 aa). Cys-1707 functions as the For PL2-PRO activity in the catalytic mechanism. Zn(2+) is bound by residues Cys-1785, Cys-1787, Cys-1819, and Cys-1821. The C4-type 2 zinc finger occupies 1785–1821; it reads CDCGIKQESRVGVDAVMHFGTLAKTDLFNGYKIGCNC. Catalysis depends on for PL2-PRO activity residues His-1864 and Asp-1878. One can recognise a Nucleic acid-binding domain in the interval 1942-2043; that stretch reads IKAQFKPFAK…TYFNKPSFKS (102 aa). The region spanning 2058 to 2207 is the G2M domain; the sequence is ESQGNVVTSV…NDKTIFYTTE (150 aa). The next 3 membrane-spanning stretches (helical) occupy residues 2176–2196, 2237–2257, and 2268–2288; these read AIEF…LLHF, FLVV…NVIF, and FPIF…LVTI. The interval 2176-2413 is HD1; that stretch reads AIEFYGFLKW…FVLLRFYIVV (238 aa). Residues 2273 to 2334 enclose the 3Ecto domain; it reads GRIVMWIKAT…AIDFVQYEVD (62 aa). Disulfide bonds link Cys-2289–Cys-2313 and Cys-2304–Cys-2310. 2 consecutive transmembrane segments (helical) span residues 2351–2371 and 2393–2413; these read LVIG…LIGL and FIVF…YIVV. Residues 2421-2511 are Y1; sequence GFIRHIVYGC…ELKRPVNPTD (91 aa). Positions 2421–2788 constitute a CoV Nsp3 Y domain; the sequence is GFIRHIVYGC…LTTPFSLKGG (368 aa). Zn(2+) contacts are provided by His-2425, Cys-2430, Cys-2435, Cys-2438, Cys-2471, His-2474, Cys-2478, and Cys-2481. The tract at residues 2425–2438 is ZF1; it reads HIVYGCNKAGCLFC. The ZF2 stretch occupies residues 2471 to 2481; the sequence is CVKHQWNCFNC. The tract at residues 2512–2604 is Y2; sequence ASHYVVTDIK…LVDKKLITTA (93 aa). Residues 2512–2788 are coV-Y; that stretch reads ASHYVVTDIK…LTTPFSLKGG (277 aa). The interval 2605–2687 is Y3; sequence CNGISVTQIM…KSMISAVAAG (83 aa). A Y4 region spans residues 2688–2788; sequence LEFTDENYNN…LTTPFSLKGG (101 aa). The next 5 helical transmembrane spans lie at 2794-2814, 3069-3089, 3101-3121, 3128-3148, and 3153-3173; these read LLYI…ALLP, ASSI…YYLI, VVVI…VFQV, VYAC…SVIM, and IVMY…AMVI. The segment at 2794–3173 is HD2; sequence LLYILFFISL…FCVTYVAMVI (380 aa). The Nsp4C domain maps to 3187 to 3284; it reads IGVNVCSDST…TASVSTSFLQ (98 aa). In terms of domain architecture, Peptidase C30 spans 3285 to 3587; the sequence is SGIVKMVSPT…YQQLAGVKLQ (303 aa). Residues His-3325 and Cys-3429 each act as for 3CL-PRO activity in the active site. Transmembrane regions (helical) follow at residues 3601–3621, 3626–3646, 3651–3671, 3694–3714, 3722–3742, 3750–3770, and 3793–3813; these read ILIS…WTIF, THMI…MLLV, FYLT…NYLV, FTYV…IFIT, IFSL…WYFG, LLFI…SLAI, and LILL…GFFS. The tract at residues 3601–3813 is HD3; that stretch reads ILISTFLFSC…ILSCYWGFFS (213 aa). The 89-residue stretch at 3875 to 3963 folds into the RdRp Nsp7 cofactor domain; sequence SKLTDVKCAN…DYVQDSTVLQ (89 aa). The 197-residue stretch at 3964-4160 folds into the RdRp Nsp8 cofactor domain; the sequence is ALQSEFVNMA…YNEVANAVMQ (197 aa). In terms of domain architecture, Nsp9 ssRNA-binding spans 4161–4270; the sequence is NNELMPHKLK…GTLSSTIRLQ (110 aa). Residues 4271-4408 form the ExoN/MTase coactivator domain; the sequence is AGVATEYAAN…CVGSSVAVQS (138 aa). Zn(2+)-binding residues include Cys-4344, Cys-4347, His-4353, Cys-4360, Cys-4386, Cys-4389, Cys-4397, and Cys-4399. 2 zinc fingers span residues 4344–4360 and 4386–4399; these read CIYC…DGIC and CQVC…SCSC.

Belongs to the coronaviruses polyprotein 1ab family. As to quaternary structure, 3CL-PRO exists as monomer and homodimer. Eight copies of nsp7 and eight copies of nsp8 assemble to form a heterohexadecamer. Nsp9 is a dimer. Nsp10 forms a dodecamer. Specific enzymatic cleavages in vivo by its own proteases yield mature proteins. 3CL-PRO and PL-PRO proteinases are autocatalytically processed.

The protein localises to the host membrane. The protein resides in the host cytoplasm. It localises to the host perinuclear region. The enzyme catalyses Thiol-dependent hydrolysis of ester, thioester, amide, peptide and isopeptide bonds formed by the C-terminal Gly of ubiquitin (a 76-residue protein attached to proteins as an intracellular targeting signal).. It catalyses the reaction TSAVLQ-|-SGFRK-NH2 and SGVTFQ-|-GKFKK the two peptides corresponding to the two self-cleavage sites of the SARS 3C-like proteinase are the two most reactive peptide substrates. The enzyme exhibits a strong preference for substrates containing Gln at P1 position and Leu at P2 position.. It carries out the reaction a 5'-end diphospho-ribonucleoside in mRNA + GTP + H(+) = a 5'-end (5'-triphosphoguanosine)-ribonucleoside in mRNA + diphosphate. Its function is as follows. The papain-like proteinase 1 (PL1-PRO) and papain-like proteinase 2 (PL2-PRO) are responsible for the cleavages located at the N-terminus of the replicase polyprotein. In addition, PLP2 possesses a deubiquitinating/deISGylating activity and processes both 'Lys-48'- and 'Lys-63'-linked polyubiquitin chains from cellular substrates. Antagonizes innate immune induction of type I interferon by blocking the phosphorylation, dimerization and subsequent nuclear translocation of host IRF-3. In terms of biological role, responsible for the majority of cleavages as it cleaves the C-terminus of replicase polyprotein at 11 sites. Recognizes substrates containing the core sequence [ILMVF]-Q-|-[SGACN]. Inhibited by the substrate-analog Cbz-Val-Asn-Ser-Thr-Leu-Gln-CMK. Also contains an ADP-ribose-1''-phosphate (ADRP)-binding function. Functionally, nsp7-nsp8 hexadecamer may possibly confer processivity to the polymerase, maybe by binding to dsRNA or by producing primers utilized by the latter. Catalytic subunit of viral RNA capping enzyme which catalyzes the RNA guanylyltransferase reaction for genomic and sub-genomic RNAs. The kinase-like NiRAN domain of NSP12 transfers RNA to the amino terminus of NSP9, forming a covalent RNA-protein intermediate. Subsequently, the NiRAN domain transfers RNA to GDP, forming the core cap structure GpppA-RNA. The NSP14 and NSP16 methyltransferases then add methyl groups to form functional cap structures. Its function is as follows. Binds to the 40S ribosomal subunit and inhibits host translation. The nsp1-40S ribosome complex further induces an endonucleolytic cleavage near the 5'UTR of host mRNAs, targeting them for degradation. By suppressing host gene expression, nsp1 facilitates efficient viral gene expression in infected cells and evasion from host immune response. The polypeptide is Replicase polyprotein 1a (Human coronavirus HKU1 (isolate N5) (HCoV-HKU1)).